A 30-amino-acid polypeptide reads, in one-letter code: Truncated interleukin-1-binding protein (30 aa).

An N-terminal signal peptide occupies residues 1-18; it reads MSILPVIFLPIFFYSSFV.

This sequence belongs to the interleukin-1 receptor family.

This is Truncated interleukin-1-binding protein from Vaccinia virus (strain Copenhagen) (VACV).